Here is a 662-residue protein sequence, read N- to C-terminus: UvrABC system protein B (662 aa).

The 158-residue stretch at 31–188 (DNIEGGEKAQ…NDLVDIQFER (158 aa)) folds into the Helicase ATP-binding domain. 44–51 (GATGTGKT) is an ATP binding site. Positions 97–120 (YYDYYQPEAYVPSSDTYIEKDSSV) match the Beta-hairpin motif. A Helicase C-terminal domain is found at 435–601 (QIDDLLGEIN…TIKKEIRDLI (167 aa)). The 36-residue stretch at 626–661 (KELVKKLEKQMQEAVEVLDFELAAQIRDMMLEVKAL) folds into the UVR domain.

Belongs to the UvrB family. Forms a heterotetramer with UvrA during the search for lesions. Interacts with UvrC in an incision complex.

It localises to the cytoplasm. Its function is as follows. The UvrABC repair system catalyzes the recognition and processing of DNA lesions. A damage recognition complex composed of 2 UvrA and 2 UvrB subunits scans DNA for abnormalities. Upon binding of the UvrA(2)B(2) complex to a putative damaged site, the DNA wraps around one UvrB monomer. DNA wrap is dependent on ATP binding by UvrB and probably causes local melting of the DNA helix, facilitating insertion of UvrB beta-hairpin between the DNA strands. Then UvrB probes one DNA strand for the presence of a lesion. If a lesion is found the UvrA subunits dissociate and the UvrB-DNA preincision complex is formed. This complex is subsequently bound by UvrC and the second UvrB is released. If no lesion is found, the DNA wraps around the other UvrB subunit that will check the other stand for damage. This Streptococcus pneumoniae serotype 19F (strain G54) protein is UvrABC system protein B.